We begin with the raw amino-acid sequence, 456 residues long: Gamma-aminobutyric acid receptor subunit alpha-1 (456 aa).

Residues 1–27 (MKKSPGLSDYLWAWTLFLSTLTGRSYG) form the signal peptide. The Extracellular segment spans residues 28–253 (QPSLQDELKD…FHLKRKIGYF (226 aa)). N-linked (GlcNAc...) asparagine glycosylation occurs at N38. R94 lines the 4-aminobutanoate pocket. N138 carries N-linked (GlcNAc...) asparagine glycosylation. T157 lines the 4-aminobutanoate pocket. Residues C166 and C180 are joined by a disulfide bond. Residues 254-274 (VIQTYLPCIMTVILSQVSFWL) traverse the membrane as a helical segment. The Cytoplasmic portion of the chain corresponds to 275–279 (NRESV). Residues 280 to 301 (PARTVFGVTTVLTMTTLSISAR) form a helical membrane-spanning segment. Topologically, residues 302 to 311 (NSLPKVAYAT) are extracellular. A helical transmembrane segment spans residues 312 to 333 (AMDWFIAVCYAFVFSALIEFAT). Over 334-421 (VNYFTKRGYA…TFNSVSKIDR (88 aa)) the chain is Cytoplasmic. Residues 422-441 (LSRIAFPLLFGIFNLVYWAT) traverse the membrane as a helical segment. Over 442–456 (YLNREPQLKAPTPHQ) the chain is Extracellular.

Belongs to the ligand-gated ion channel (TC 1.A.9) family. Gamma-aminobutyric acid receptor (TC 1.A.9.5) subfamily. GABRA1 sub-subfamily. Heteropentamer, formed by a combination of alpha (GABRA1-6), beta (GABRB1-3), gamma (GABRG1-3), delta (GABRD), epsilon (GABRE), rho (GABRR1-3), pi (GABRP) and theta (GABRQ) subunits, each subunit exhibiting distinct physiological and pharmacological properties. Interacts with UBQLN1. Interacts with TRAK1. Interacts with KIF21B. Identified in a complex of 720 kDa composed of LHFPL4, NLGN2, GABRA1, GABRB2, GABRG2 and GABRB3. Interacts with LHFPL4. Interacts with NLGN2. Interacts with SHISA7; interaction leads to the regulation of GABA(A) receptor trafficking, channel deactivation kinetics and pharmacology. As to expression, cerebellar granule cells, Purkinje cells and stellate/basket cells.

It localises to the postsynaptic cell membrane. Its subcellular location is the cell membrane. The protein resides in the cytoplasmic vesicle membrane. The enzyme catalyses chloride(in) = chloride(out). Its activity is regulated as follows. Allosterically activated by benzodiazepines, the neuroanesthetic alphaxalone and pentobarbital. Inhibited by the antagonist bicuculline. Potentiated by histamine. Functionally, alpha subunit of the heteropentameric ligand-gated chloride channel gated by gamma-aminobutyric acid (GABA), a major inhibitory neurotransmitter in the brain. GABA-gated chloride channels, also named GABA(A) receptors (GABAAR), consist of five subunits arranged around a central pore and contain GABA active binding site(s) located at the alpha and beta subunit interface(s). When activated by GABA, GABAARs selectively allow the flow of chloride anions across the cell membrane down their electrochemical gradient. Alpha-1/GABRA1-containing GABAARs are largely synaptic. Chloride influx into the postsynaptic neuron following GABAAR opening decreases the neuron ability to generate a new action potential, thereby reducing nerve transmission. GABAARs containing alpha-1 and beta-2 or -3 subunits exhibit synaptogenic activity; the gamma-2 subunit being necessary but not sufficient to induce rapid synaptic contacts formation. GABAARs function also as histamine receptor where histamine binds at the interface of two neighboring beta subunits and potentiates GABA response. GABAARs containing alpha, beta and epsilon subunits also permit spontaneous chloride channel activity while preserving the structural information required for GABA-gated openings. Alpha-1-mediated plasticity in the orbitofrontal cortex regulates context-dependent action selection. Together with rho subunits, may also control neuronal and glial GABAergic transmission in the cerebellum. This Bos taurus (Bovine) protein is Gamma-aminobutyric acid receptor subunit alpha-1 (GABRA1).